A 353-amino-acid chain; its full sequence is Photosystem II protein D1 (353 aa).

Threonine 2 is subject to N-acetylthreonine. Phosphothreonine is present on threonine 2. Helical transmembrane passes span 29 to 46, 118 to 133, and 142 to 156; these read YIGW…TATS, HFLL…EWEL, and WIAV…AATA. Position 118 (histidine 118) interacts with chlorophyll a. Residue tyrosine 126 coordinates pheophytin a. Aspartate 170 and glutamate 189 together coordinate [CaMn4O5] cluster. Residues 197-218 form a helical membrane-spanning segment; that stretch reads FHMLGVAGVFGGSLFSAMHGSL. Histidine 198 contacts chlorophyll a. Residues histidine 215 and 264–265 contribute to the a quinone site; that span reads SF. Position 215 (histidine 215) interacts with Fe cation. Histidine 272 contributes to the Fe cation binding site. Residues 274–288 form a helical membrane-spanning segment; that stretch reads FLTAWPVVGIWFTAL. The [CaMn4O5] cluster site is built by histidine 332, glutamate 333, aspartate 342, and alanine 344. Residues 345–353 constitute a propeptide that is removed on maturation; the sequence is VVEAPSTNG.

Belongs to the reaction center PufL/M/PsbA/D family. As to quaternary structure, PSII is composed of 1 copy each of membrane proteins PsbA, PsbB, PsbC, PsbD, PsbE, PsbF, PsbH, PsbI, PsbJ, PsbK, PsbL, PsbM, PsbT, PsbX, PsbY, PsbZ, Psb30/Ycf12, at least 3 peripheral proteins of the oxygen-evolving complex and a large number of cofactors. It forms dimeric complexes. The cofactor is The D1/D2 heterodimer binds P680, chlorophylls that are the primary electron donor of PSII, and subsequent electron acceptors. It shares a non-heme iron and each subunit binds pheophytin, quinone, additional chlorophylls, carotenoids and lipids. D1 provides most of the ligands for the Mn4-Ca-O5 cluster of the oxygen-evolving complex (OEC). There is also a Cl(-1) ion associated with D1 and D2, which is required for oxygen evolution. The PSII complex binds additional chlorophylls, carotenoids and specific lipids.. Tyr-161 forms a radical intermediate that is referred to as redox-active TyrZ, YZ or Y-Z. Post-translationally, C-terminally processed by CTPA; processing is essential to allow assembly of the oxygen-evolving complex and thus photosynthetic growth.

The protein resides in the plastid. Its subcellular location is the chloroplast thylakoid membrane. It carries out the reaction 2 a plastoquinone + 4 hnu + 2 H2O = 2 a plastoquinol + O2. Functionally, photosystem II (PSII) is a light-driven water:plastoquinone oxidoreductase that uses light energy to abstract electrons from H(2)O, generating O(2) and a proton gradient subsequently used for ATP formation. It consists of a core antenna complex that captures photons, and an electron transfer chain that converts photonic excitation into a charge separation. The D1/D2 (PsbA/PsbD) reaction center heterodimer binds P680, the primary electron donor of PSII as well as several subsequent electron acceptors. This chain is Photosystem II protein D1, found in Aethionema cordifolium (Lebanon stonecress).